A 284-amino-acid chain; its full sequence is Diaminopimelate epimerase (284 aa).

The substrate site is built by Asn-20, Gln-53, and Asn-73. The active-site Proton donor is the Cys-82. Substrate contacts are provided by residues 83 to 84 (GN), Asn-167, Asn-200, and 218 to 219 (ER). Cys-227 serves as the catalytic Proton acceptor. Residue 228 to 229 (GS) participates in substrate binding.

The protein belongs to the diaminopimelate epimerase family. In terms of assembly, homodimer.

It localises to the cytoplasm. It catalyses the reaction (2S,6S)-2,6-diaminopimelate = meso-2,6-diaminopimelate. It functions in the pathway amino-acid biosynthesis; L-lysine biosynthesis via DAP pathway; DL-2,6-diaminopimelate from LL-2,6-diaminopimelate: step 1/1. Its function is as follows. Catalyzes the stereoinversion of LL-2,6-diaminopimelate (L,L-DAP) to meso-diaminopimelate (meso-DAP), a precursor of L-lysine and an essential component of the bacterial peptidoglycan. This Xanthomonas axonopodis pv. citri (strain 306) protein is Diaminopimelate epimerase.